The following is a 196-amino-acid chain: Regulator of G-protein signaling 8 (196 aa).

S26 bears the Phosphoserine mark. The RGS domain occupies 72-188; it reads SFDVLLSHKY…LRSKMYLDLL (117 aa).

In terms of assembly, interacts with GNAO1 and GNAI3.

The protein resides in the cell membrane. It is found in the membrane. Its subcellular location is the perikaryon. The protein localises to the cell projection. It localises to the dendrite. The protein resides in the nucleus. In terms of biological role, regulates G protein-coupled receptor signaling cascades, including signaling via muscarinic acetylcholine receptor CHRM2 and dopamine receptor DRD2. Inhibits signal transduction by increasing the GTPase activity of G protein alpha subunits, thereby driving them into their inactive GDP-bound form. Modulates the activity of potassium channels that are activated in response to DRD2 and CHRM2 signaling. This chain is Regulator of G-protein signaling 8 (RGS8), found in Macaca fascicularis (Crab-eating macaque).